Here is a 376-residue protein sequence, read N- to C-terminus: Succinyl-diaminopimelate desuccinylase (376 aa).

Histidine 66 serves as a coordination point for Zn(2+). Aspartate 68 is a catalytic residue. Aspartate 99 serves as a coordination point for Zn(2+). Catalysis depends on glutamate 133, which acts as the Proton acceptor. The Zn(2+) site is built by glutamate 134, glutamate 162, and histidine 348.

This sequence belongs to the peptidase M20A family. DapE subfamily. In terms of assembly, homodimer. The cofactor is Zn(2+). Co(2+) is required as a cofactor.

It carries out the reaction N-succinyl-(2S,6S)-2,6-diaminopimelate + H2O = (2S,6S)-2,6-diaminopimelate + succinate. Its pathway is amino-acid biosynthesis; L-lysine biosynthesis via DAP pathway; LL-2,6-diaminopimelate from (S)-tetrahydrodipicolinate (succinylase route): step 3/3. Its function is as follows. Catalyzes the hydrolysis of N-succinyl-L,L-diaminopimelic acid (SDAP), forming succinate and LL-2,6-diaminopimelate (DAP), an intermediate involved in the bacterial biosynthesis of lysine and meso-diaminopimelic acid, an essential component of bacterial cell walls. This Xanthomonas oryzae pv. oryzae (strain PXO99A) protein is Succinyl-diaminopimelate desuccinylase.